The primary structure comprises 395 residues: LL-diaminopimelate aminotransferase (395 aa).

The substrate site is built by Tyr-14 and Gly-41. Pyridoxal 5'-phosphate contacts are provided by residues Tyr-71, 104-105, Tyr-128, Asn-174, Tyr-205, and 233-235; these read AK and SFS. 3 residues coordinate substrate: Lys-105, Tyr-128, and Asn-174. N6-(pyridoxal phosphate)lysine is present on Lys-236. Pyridoxal 5'-phosphate-binding residues include Arg-244 and Asn-275. Residues Asn-275 and Arg-368 each coordinate substrate.

This sequence belongs to the class-I pyridoxal-phosphate-dependent aminotransferase family. LL-diaminopimelate aminotransferase subfamily. In terms of assembly, homodimer. Requires pyridoxal 5'-phosphate as cofactor.

The catalysed reaction is (2S,6S)-2,6-diaminopimelate + 2-oxoglutarate = (S)-2,3,4,5-tetrahydrodipicolinate + L-glutamate + H2O + H(+). It functions in the pathway amino-acid biosynthesis; L-lysine biosynthesis via DAP pathway; LL-2,6-diaminopimelate from (S)-tetrahydrodipicolinate (aminotransferase route): step 1/1. Involved in the synthesis of meso-diaminopimelate (m-DAP or DL-DAP), required for both lysine and peptidoglycan biosynthesis. Catalyzes the direct conversion of tetrahydrodipicolinate to LL-diaminopimelate. The polypeptide is LL-diaminopimelate aminotransferase (Chlamydia caviae (strain ATCC VR-813 / DSM 19441 / 03DC25 / GPIC) (Chlamydophila caviae)).